We begin with the raw amino-acid sequence, 1078 residues long: Protein U90 (1078 aa).

Residues 1–12 (MESAKDTTSTSM) are compositionally biased toward polar residues. Disordered regions lie at residues 1 to 28 (MESAKDTTSTSMFILGKPSGNNMESNEE), 464 to 483 (SPTDNNIPTPSKNNESPTRQ), 703 to 732 (HMNNTNENTPFSKSLYSPPEVTPSKEDHKT), and 781 to 818 (ESEDEEDGNNIIDKSMLEKTIKSEPNSESSSESDDCTS).

In Homo sapiens (Human), this protein is Protein U90 (U90).